Reading from the N-terminus, the 359-residue chain is Type-1 angiotensin II receptor (359 aa).

Over 1–25 the chain is Extracellular; the sequence is MILNSSTEDGIKRIQDDCPKAGRHN. A glycan (N-linked (GlcNAc...) asparagine) is linked at Asn-4. Angiotensin II is bound by residues Gln-15 and Asp-17. Cystine bridges form between Cys-18–Cys-274 and Cys-101–Cys-180. The helical transmembrane segment at 26-55 threads the bilayer; it reads YIFIMIPTLYSIIFVVGLFGNSLVVIVIYF. Residues 56–61 are Cytoplasmic-facing; it reads YMKLKT. Residues 62–89 traverse the membrane as a helical segment; sequence VASVFLLNLALADLCFLLTLPLWAVYTA. The Extracellular segment spans residues 90–98; it reads MEYRWPFGN. A helical membrane pass occupies residues 99 to 125; sequence YLCKIASGSVSFNLYASVFLLTCLSID. The Cytoplasmic segment spans residues 126 to 141; the sequence is RYLAIVHPMKSRLRRT. Residues 142-165 form a helical membrane-spanning segment; sequence MLVAKVTCIIIWLLAGLASLPTII. Residues 166–190 are Extracellular-facing; the sequence is HRNVFFIENTNITVCAFHYESQNST. Arg-167 lines the angiotensin II pocket. A glycan (N-linked (GlcNAc...) asparagine) is linked at Asn-176. 3 residues coordinate angiotensin II: Phe-182, His-183, and Tyr-184. Asn-188 is a glycosylation site (N-linked (GlcNAc...) asparagine). The helical transmembrane segment at 191–216 threads the bilayer; it reads LPVGLGLTKNILGFLFPFLIILTSYT. Lys-199 provides a ligand contact to angiotensin II. Residues 217-239 are Cytoplasmic-facing; the sequence is LIWKTLKKAYEIQKNKPRKDDIF. A helical membrane pass occupies residues 240 to 268; that stretch reads KIILAIVLFFFFSWVPHQIFTFMDVLIQL. At 269–278 the chain is on the extracellular side; that stretch reads GLIRDCKIED. Residues 279–304 traverse the membrane as a helical segment; that stretch reads IVDTAMPITICLAYFNNCLNPPFYGF. The Cytoplasmic segment spans residues 305 to 359; that stretch reads LGKKFKKYFLQLLKYIPPKAKSHSNLSTKMSTLSYRPSENGNSSTKKPAPCTEVE. A compositionally biased stretch (polar residues) spans 335–350; the sequence is STLSYRPSENGNSSTK. Residues 335 to 359 form a disordered region; sequence STLSYRPSENGNSSTKKPAPCTEVE. Cys-355 carries S-palmitoyl cysteine lipidation.

It belongs to the G-protein coupled receptor 1 family. In terms of assembly, interacts with MAS1. Interacts with ARRB1. Interacts with FLNA (via filamin repeat 21); increases PKA-mediated phosphorylation of FLNA. Post-translationally, C-terminal Ser or Thr residues may be phosphorylated.

It is found in the cell membrane. Receptor for angiotensin II, a vasoconstricting peptide, which acts as a key regulator of blood pressure and sodium retention by the kidney. The activated receptor in turn couples to G-alpha proteins G(q) (GNAQ, GNA11, GNA14 or GNA15) and thus activates phospholipase C and increases the cytosolic Ca(2+) concentrations, which in turn triggers cellular responses such as stimulation of protein kinase C. This chain is Type-1 angiotensin II receptor (AGTR1), found in Ovis aries (Sheep).